A 346-amino-acid polypeptide reads, in one-letter code: Phosphoribosylformylglycinamidine cyclo-ligase (346 aa).

Belongs to the AIR synthase family.

It localises to the cytoplasm. The catalysed reaction is 2-formamido-N(1)-(5-O-phospho-beta-D-ribosyl)acetamidine + ATP = 5-amino-1-(5-phospho-beta-D-ribosyl)imidazole + ADP + phosphate + H(+). It functions in the pathway purine metabolism; IMP biosynthesis via de novo pathway; 5-amino-1-(5-phospho-D-ribosyl)imidazole from N(2)-formyl-N(1)-(5-phospho-D-ribosyl)glycinamide: step 2/2. The protein is Phosphoribosylformylglycinamidine cyclo-ligase of Vibrio parahaemolyticus serotype O3:K6 (strain RIMD 2210633).